Consider the following 220-residue polypeptide: Probable GTP-binding protein EngB (220 aa).

An EngB-type G domain is found at 26-200 (EGIEIAFAGR…RAKLDEWYAP (175 aa)). GTP contacts are provided by residues 34-41 (GRSNAGKS), 61-65 (GRTQL), 79-82 (DLPG), 146-149 (TKAD), and 179-181 (FSS). Positions 41 and 63 each coordinate Mg(2+).

This sequence belongs to the TRAFAC class TrmE-Era-EngA-EngB-Septin-like GTPase superfamily. EngB GTPase family. Mg(2+) serves as cofactor.

In terms of biological role, necessary for normal cell division and for the maintenance of normal septation. This Vibrio cholerae serotype O1 (strain ATCC 39315 / El Tor Inaba N16961) protein is Probable GTP-binding protein EngB.